Here is a 106-residue protein sequence, read N- to C-terminus: Urease subunit beta (106 aa).

Belongs to the urease beta subunit family. Heterotrimer of UreA (gamma), UreB (beta) and UreC (alpha) subunits. Three heterotrimers associate to form the active enzyme.

It is found in the cytoplasm. It catalyses the reaction urea + 2 H2O + H(+) = hydrogencarbonate + 2 NH4(+). The protein operates within nitrogen metabolism; urea degradation; CO(2) and NH(3) from urea (urease route): step 1/1. In Parasynechococcus marenigrum (strain WH8102), this protein is Urease subunit beta.